The chain runs to 562 residues: Nucleoprotein (562 aa).

Residues 54 to 237 (LRKTKRTDGD…ITKDESAINI (184 aa)) form a binding site for the cap structure m7GTP region. Mn(2+)-binding residues include Asp-381 and Glu-383. Residues Glu-391, Cys-498, His-501, and Cys-523 each coordinate Zn(2+). Asp-527 is a binding site for Mn(2+).

This sequence belongs to the arenaviridae nucleocapsid protein family. As to quaternary structure, homomultimerizes to form the nucleocapsid. Binds to viral genomic RNA. Interacts with glycoprotein G2. Interacts with protein Z; this interaction probably directs the encapsidated genome to budding sites. Interacts with protein L; this interaction does not interfere with Z-L interaction. Interacts with host IKBKE (via Protein kinase domain); the interaction inhibits IKBKE kinase activity.

The protein resides in the virion. It is found in the host cytoplasm. Its function is as follows. Encapsidates the genome, protecting it from nucleases. The encapsidated genomic RNA is termed the nucleocapsid (NC). Serves as template for viral transcription and replication. The increased presence of protein N in host cell does not seem to trigger the switch from transcription to replication as observed in other negative strain RNA viruses. Through the interaction with host IKBKE, strongly inhibits the phosphorylation and nuclear translocation of host IRF3, a protein involved in interferon activation pathway, leading to the inhibition of interferon-beta and IRF3-dependent promoters activation. Also encodes a functional 3'-5' exoribonuclease that degrades preferentially dsRNA substrates and thereby participates in the suppression of interferon induction. This chain is Nucleoprotein, found in Homo sapiens (Human).